A 434-amino-acid polypeptide reads, in one-letter code: MSHEEDLIDYSDEELQTTDAAATTATPAANGGQAKKDGELTVTGGRADKKGSYVGIHSTGFRDFLLKGELLRAITDCGFEHPSEVQQVCIPTAILNVDVLCQAKSGLGKTAVFVLTTLHQLEPVPGECSVLVMCHTRELAYQIKNEYARFSKYLPDVKTAVFYGGTPIQKDIEVLSNKDTFPNIIVGTPGRLNALVRDKKLSLRNVKAFVLDECDKMLDQIDMRRDVQEIFRATPTDKQVMMFSATLSQDVRPICKKFMRNPLEVYVDDDTKLTLHGLQQYYIKLSEAEKNRKLNELLDSLEFNQVIIFVKSTIRANELDKLLRECNFPSIAVHSGRYKEFKEFNKRICVATDVFGRGIDIERINLAINYDLPADADSYLHRVGRAGRFGTKGLSISFVSTPEDEQVLKDIEKRFEVALPEYPEEGVDSSTYMA.

Residues 59 to 87 (TGFRDFLLKGELLRAITDCGFEHPSEVQQ) carry the Q motif motif. The Helicase ATP-binding domain occupies 90–265 (IPTAILNVDV…KKFMRNPLEV (176 aa)). An ATP-binding site is contributed by 103-110 (AKSGLGKT). The DECD box motif lies at 212–215 (DECD). One can recognise a Helicase C-terminal domain in the interval 293–430 (KLNELLDSLE…EYPEEGVDSS (138 aa)).

It belongs to the DEAD box helicase family. DECD subfamily.

It is found in the nucleus. It carries out the reaction ATP + H2O = ADP + phosphate + H(+). ATP-binding RNA helicase involved in transcription elongation and required for the export of mRNA out of the nucleus. SUB2 also plays a role in pre-mRNA splicing and spliceosome assembly. May be involved in rDNA and telomeric silencing, and maintenance of genome integrity. The protein is ATP-dependent RNA helicase sub2 (sub2) of Emericella nidulans (strain FGSC A4 / ATCC 38163 / CBS 112.46 / NRRL 194 / M139) (Aspergillus nidulans).